The sequence spans 198 residues: Putative pseudouridine methyltransferase (198 aa).

S-adenosyl-L-methionine contacts are provided by Leu132 and Cys186.

Belongs to the methyltransferase superfamily. TrmY family.

Its subcellular location is the cytoplasm. This is Putative pseudouridine methyltransferase from Vibrio vulnificus (strain CMCP6).